The chain runs to 868 residues: MWRTKRGRTRRRDAGGNPWQNLEKTSVLQETRMFNETPVNARKCTHILTKILYLLNQGEVLGTREATECFFAMTKLFQSKDVVMRRMVYLGIKELSPIADDVIIVTSSLTKDMTGKEDLYRAPAIRALCSITDSTMLQAVERYMKQCIVDRNAPVSSGALVSSLHLASTAGEVVKRWANEAQEALNSDNIMVQYHGLGLLYHIRKADRLAVTKLVNKLTRQHLRSPYATCFLIRIACKIMEEEDASGNATEDSPLFNFVECCLRNKSEMVVYEAAHAVVNLKRTNPRELSTAVSILQLFCGSSKATLRFAAVRTMNKVAMLHPPAVNVCNLDLEGLIADSNRSVATLAITTLLKTGAESSVERLMKQIATFVAEISDEFKLVVVQAIRSLCTKFPRKHAVTMNFLSGMLREEGGLEYKTSIVDTIILIIEENPDAKEAGLGHLCEFIEDCEHTSLAVRILHLLGKEGPYSKCPSRYIRFIYNRVILENATVRAAAVAAIAQFGACCPDLLPNVLVLLNRCQMDCDDEVRDRATYYYTILNQSNPELNKRFIADHEIVSLPLLEKSLNEHLKGPLAERFDLSIVPKSQVIQPEVNEEVMIMNKAAPKIARVNREEVNTEKLLAIPGIHHVGALHKSCAPVQLTESETEYTVSCIKHCFAHHIVFQFDCVNTLSDQLLENVRVDLELPEGFVSRAVIPCAKLPYGDKESTYVIVQFPEDVPSSIATLGATLRFLVKDCDPATGQPDSDEGYNDEYILEDIEVTVADQMQKSKKQNFLAAWESADTEEWVEAEDTFELSSVTSLQDAVNTILKFLGLAPANLSENVPDGTFRGGVEVLVRSKLAVADGVTMQLTVRSTDMDVAELITSAVG.

The segment covering 1–11 (MWRTKRGRTRR) has biased composition (basic residues). Residues 1 to 22 (MWRTKRGRTRRRDAGGNPWQNL) form a disordered region. 4 HEAT repeats span residues 64 to 101 (REAT…IADD), 287 to 324 (RELS…LHPP), 326 to 359 (VNVC…GAES), and 360 to 396 (SVER…KFPR).

This sequence belongs to the COPG family. In terms of assembly, oligomeric complex that consists of at least the alpha, beta, beta', gamma, delta, epsilon and zeta subunits.

The protein localises to the cytoplasm. Its subcellular location is the golgi apparatus membrane. It localises to the cytoplasmic vesicle. The protein resides in the COPI-coated vesicle membrane. It is found in the endoplasmic reticulum. Its function is as follows. The coatomer is a cytosolic protein complex that binds to dilysine motifs and reversibly associates with Golgi non-clathrin-coated vesicles, which further mediate biosynthetic protein transport from the ER, via the Golgi up to the trans Golgi network. Coatomer complex is required for budding from Golgi membranes, and is essential for the retrograde Golgi-to-ER transport of dilysine-tagged proteins. This chain is Coatomer subunit gamma, found in Anopheles gambiae (African malaria mosquito).